The chain runs to 29 residues: Orphan peptide CllNtx (29 aa).

In terms of processing, contains 3 disulfide bonds. Expressed by the venom gland.

It is found in the secreted. Its function is as follows. May act as a toxin. The protein is Orphan peptide CllNtx of Centruroides limpidus (Mexican scorpion).